A 211-amino-acid polypeptide reads, in one-letter code: Tudor-interacting repair regulator protein (211 aa).

Residues lysine 10 and lysine 151 each participate in a glycyl lysine isopeptide (Lys-Gly) (interchain with G-Cter in ubiquitin) cross-link. The interaction with PXN stretch occupies residues threonine 118–lysine 205.

The protein belongs to the Nudix hydrolase family. TIRR subfamily. As to quaternary structure, homodimer. Interacts with TP53BP1 (via the Tudor-like domain); interaction is abolished following DNA damage and TP53BP1 phosphorylation by ATM. Interacts (via the cytoplasmic part) with SDC4. Interacts with TGFB1I1 and PXN.

The protein resides in the nucleus. In terms of biological role, key regulator of TP53BP1 required to stabilize TP53BP1 and regulate its recruitment to chromatin. In absence of DNA damage, interacts with the tandem Tudor-like domain of TP53BP1, masking the region that binds histone H4 dimethylated at 'Lys-20' (H4K20me2), thereby preventing TP53BP1 recruitment to chromatin and maintaining TP53BP1 localization to the nucleus. Following DNA damage, ATM-induced phosphorylation of TP53BP1 and subsequent recruitment of RIF1 leads to dissociate NUDT16L1/TIRR from TP53BP1, unmasking the tandem Tudor-like domain and allowing recruitment of TP53BP1 to DNA double strand breaks (DSBs). Binds U8 snoRNA. This Mus musculus (Mouse) protein is Tudor-interacting repair regulator protein.